Here is a 364-residue protein sequence, read N- to C-terminus: 4-hydroxy-3-methylbut-2-en-1-yl diphosphate synthase (flavodoxin) (364 aa).

4 residues coordinate [4Fe-4S] cluster: Cys268, Cys271, Cys303, and Glu310.

This sequence belongs to the IspG family. It depends on [4Fe-4S] cluster as a cofactor.

It carries out the reaction (2E)-4-hydroxy-3-methylbut-2-enyl diphosphate + oxidized [flavodoxin] + H2O + 2 H(+) = 2-C-methyl-D-erythritol 2,4-cyclic diphosphate + reduced [flavodoxin]. It participates in isoprenoid biosynthesis; isopentenyl diphosphate biosynthesis via DXP pathway; isopentenyl diphosphate from 1-deoxy-D-xylulose 5-phosphate: step 5/6. In terms of biological role, converts 2C-methyl-D-erythritol 2,4-cyclodiphosphate (ME-2,4cPP) into 1-hydroxy-2-methyl-2-(E)-butenyl 4-diphosphate. The sequence is that of 4-hydroxy-3-methylbut-2-en-1-yl diphosphate synthase (flavodoxin) from Anoxybacillus flavithermus (strain DSM 21510 / WK1).